The primary structure comprises 59 residues: Large ribosomal subunit protein bL32 (59 aa).

Positions 1–15 (MAVPKRKTSKSKRDM) are enriched in basic residues. The disordered stretch occupies residues 1-21 (MAVPKRKTSKSKRDMRRASNS).

The protein belongs to the bacterial ribosomal protein bL32 family.

The protein is Large ribosomal subunit protein bL32 of Alkaliphilus metalliredigens (strain QYMF).